The sequence spans 325 residues: Ribosomal RNA small subunit methyltransferase H (325 aa).

S-adenosyl-L-methionine-binding positions include 32–34, Asp52, Phe79, Asp100, and Gln107; that span reads GGH.

This sequence belongs to the methyltransferase superfamily. RsmH family.

Its subcellular location is the cytoplasm. The enzyme catalyses cytidine(1402) in 16S rRNA + S-adenosyl-L-methionine = N(4)-methylcytidine(1402) in 16S rRNA + S-adenosyl-L-homocysteine + H(+). Specifically methylates the N4 position of cytidine in position 1402 (C1402) of 16S rRNA. This chain is Ribosomal RNA small subunit methyltransferase H, found in Oceanobacillus iheyensis (strain DSM 14371 / CIP 107618 / JCM 11309 / KCTC 3954 / HTE831).